Reading from the N-terminus, the 109-residue chain is T cell receptor alpha variable 27 (109 aa).

The signal sequence occupies residues 1–19 (MVLKFSVSILWIQLAWVST). The 90-residue stretch at 20 to 109 (QLLEQSPQFL…GDTGLYLCAG (90 aa)) folds into the Ig-like domain. Residues Asn36 and Asn42 are each glycosylated (N-linked (GlcNAc...) asparagine). Cys41 and Cys107 are oxidised to a cystine.

Alpha-beta TR is a heterodimer composed of an alpha and beta chain; disulfide-linked. The alpha-beta TR is associated with the transmembrane signaling CD3 coreceptor proteins to form the TR-CD3 (TcR or TCR). The assembly of alpha-beta TR heterodimers with CD3 occurs in the endoplasmic reticulum where a single alpha-beta TR heterodimer associates with one CD3D-CD3E heterodimer, one CD3G-CD3E heterodimer and one CD247 homodimer forming a stable octameric structure. CD3D-CD3E and CD3G-CD3E heterodimers preferentially associate with TR alpha and TR beta chains, respectively. The association of the CD247 homodimer is the last step of TcR assembly in the endoplasmic reticulum and is required for transport to the cell surface. As to quaternary structure, (Microbial infection) Interacts with Staphylococcus aureus enterotoxin H/entH.

The protein localises to the cell membrane. Its function is as follows. V region of the variable domain of T cell receptor (TR) alpha chain that participates in the antigen recognition. Alpha-beta T cell receptors are antigen specific receptors which are essential to the immune response and are present on the cell surface of T lymphocytes. Recognize peptide-major histocompatibility (MH) (pMH) complexes that are displayed by antigen presenting cells (APC), a prerequisite for efficient T cell adaptive immunity against pathogens. Binding of alpha-beta TR to pMH complex initiates TR-CD3 clustering on the cell surface and intracellular activation of LCK that phosphorylates the ITAM motifs of CD3G, CD3D, CD3E and CD247 enabling the recruitment of ZAP70. In turn, ZAP70 phosphorylates LAT, which recruits numerous signaling molecules to form the LAT signalosome. The LAT signalosome propagates signal branching to three major signaling pathways, the calcium, the mitogen-activated protein kinase (MAPK) kinase and the nuclear factor NF-kappa-B (NF-kB) pathways, leading to the mobilization of transcription factors that are critical for gene expression and essential for T cell growth and differentiation. The T cell repertoire is generated in the thymus, by V-(D)-J rearrangement. This repertoire is then shaped by intrathymic selection events to generate a peripheral T cell pool of self-MH restricted, non-autoaggressive T cells. Post-thymic interaction of alpha-beta TR with the pMH complexes shapes TR structural and functional avidity. In Homo sapiens (Human), this protein is T cell receptor alpha variable 27.